Here is a 212-residue protein sequence, read N- to C-terminus: NADH dehydrogenase [ubiquinone] iron-sulfur protein 8, mitochondrial (212 aa).

The N-terminal 34 residues, 1-34 (MYRLSSSMLPRALAQAMRTGHLNGQSLHSSAVAA), are a transit peptide targeting the mitochondrion. 4Fe-4S ferredoxin-type domains are found at residues 104 to 133 (RRYP…IEAE) and 143 to 172 (TRYD…EGPN). Residues cysteine 113, cysteine 116, cysteine 119, cysteine 123, cysteine 152, cysteine 155, cysteine 158, and cysteine 162 each coordinate [4Fe-4S] cluster.

This sequence belongs to the complex I 23 kDa subunit family. As to quaternary structure, complex I is composed of 45 different subunits. This is a component of the iron-sulfur (IP) fragment of the enzyme. Interacts with RAB5IF. The cofactor is [4Fe-4S] cluster.

It localises to the mitochondrion inner membrane. The catalysed reaction is a ubiquinone + NADH + 5 H(+)(in) = a ubiquinol + NAD(+) + 4 H(+)(out). In terms of biological role, core subunit of the mitochondrial membrane respiratory chain NADH dehydrogenase (Complex I) which catalyzes electron transfer from NADH through the respiratory chain, using ubiquinone as an electron acceptor. Essential for the catalytic activity and assembly of complex I. This Mus musculus (Mouse) protein is NADH dehydrogenase [ubiquinone] iron-sulfur protein 8, mitochondrial (Ndufs8).